The primary structure comprises 515 residues: Fatty acyl-CoA reductase 2 (515 aa).

At 1–465 the chain is on the cytoplasmic side; the sequence is MSMIAAFYGG…AKQHLKRLRN (465 aa). A helical membrane pass occupies residues 466–484; it reads IHYLFNTALFLIAWRLLIA. Residues 485 to 515 lie on the Peroxisomal side of the membrane; the sequence is RSQVARNVWFFIVSFCYKFLSYFRASSTLNV.

It belongs to the fatty acyl-CoA reductase family.

Its subcellular location is the peroxisome membrane. It catalyses the reaction a long-chain fatty acyl-CoA + 2 NADPH + 2 H(+) = a long-chain primary fatty alcohol + 2 NADP(+) + CoA. The catalysed reaction is hexadecanoyl-CoA + 2 NADPH + 2 H(+) = hexadecan-1-ol + 2 NADP(+) + CoA. It carries out the reaction octadecanoyl-CoA + 2 NADPH + 2 H(+) = octadecan-1-ol + 2 NADP(+) + CoA. The enzyme catalyses a very long-chain fatty acyl-CoA + 2 NADPH + 2 H(+) = a very long-chain primary fatty alcohol + 2 NADP(+) + CoA. It catalyses the reaction an ultra-long-chain fatty acyl-CoA + 2 NADPH + 2 H(+) = an ultra long-chain primary fatty alcohol + 2 NADP(+) + CoA. The catalysed reaction is eicosanoyl-CoA + 2 NADPH + 2 H(+) = eicosan-1-ol + 2 NADP(+) + CoA. It carries out the reaction docosanoyl-CoA + 2 NADPH + 2 H(+) = docosan-1-ol + 2 NADP(+) + CoA. The enzyme catalyses tetracosanoyl-CoA + 2 NADPH + 2 H(+) = tetracosan-1-ol + 2 NADP(+) + CoA. It catalyses the reaction hexacosanoyl-CoA + 2 NADPH + 2 H(+) = hexacosan-1-ol + 2 NADP(+) + CoA. The catalysed reaction is octacosanoyl-CoA + 2 NADPH + 2 H(+) = octacosan-1-ol + 2 NADP(+) + CoA. It carries out the reaction triacontanoyl-CoA + 2 NADPH + 2 H(+) = triacontan-1-ol + 2 NADP(+) + CoA. The enzyme catalyses 18-methylnonadecanoyl-CoA + 2 NADPH + 2 H(+) = 18-methylnonadecan-1-ol + 2 NADP(+) + CoA. It catalyses the reaction 20-methylheneicosanoyl-CoA + 2 NADPH + 2 H(+) = 20-methylheneicosan-1-ol + 2 NADP(+) + CoA. The catalysed reaction is 22-methyltricosanoyl-CoA + 2 NADPH + 2 H(+) = 22-methyltricosan-1-ol + 2 NADP(+) + CoA. It carries out the reaction 24-methylpentacosanoyl-CoA + 2 NADPH + 2 H(+) = 24-methylpentacosan-1-ol + 2 NADP(+) + CoA. Its function is as follows. Catalyzes the reduction of saturated but not unsaturated C16 or C18 fatty acyl-CoA to fatty alcohols (FAls). A lower activity can be observed with shorter fatty acyl-CoA substrates. Can produce very long-chain and ultra long-chain FAls, regardless of whether they have a straight or branched chain. Involved in the production of ether lipids/plasmalogens and wax monoesters whose synthesis requires FAls as substrates. The protein is Fatty acyl-CoA reductase 2 of Bos taurus (Bovine).